The following is a 333-amino-acid chain: Glycerol-3-phosphate dehydrogenase [NAD(P)+] (333 aa).

NADPH-binding residues include Ser13, Tyr14, Arg34, and Lys108. Sn-glycerol 3-phosphate is bound by residues Lys108, Gly137, and Thr139. Ala141 lines the NADPH pocket. Sn-glycerol 3-phosphate contacts are provided by Lys193, Asp246, Ser256, Arg257, and Asn258. Residue Lys193 is the Proton acceptor of the active site. Arg257 provides a ligand contact to NADPH. Position 283 (Glu283) interacts with NADPH.

Belongs to the NAD-dependent glycerol-3-phosphate dehydrogenase family.

It is found in the cytoplasm. The enzyme catalyses sn-glycerol 3-phosphate + NAD(+) = dihydroxyacetone phosphate + NADH + H(+). It catalyses the reaction sn-glycerol 3-phosphate + NADP(+) = dihydroxyacetone phosphate + NADPH + H(+). It functions in the pathway membrane lipid metabolism; glycerophospholipid metabolism. Functionally, catalyzes the reduction of the glycolytic intermediate dihydroxyacetone phosphate (DHAP) to sn-glycerol 3-phosphate (G3P), the key precursor for phospholipid synthesis. The sequence is that of Glycerol-3-phosphate dehydrogenase [NAD(P)+] from Idiomarina loihiensis (strain ATCC BAA-735 / DSM 15497 / L2-TR).